A 134-amino-acid chain; its full sequence is Early E3B 14.9 kDa protein (134 aa).

The N-terminal stretch at 1–19 is a signal peptide; sequence MQAMLPVILILLLPCIALA. Residues 54–78 traverse the membrane as a helical segment; sequence YWIVIVGIINILSCTFFSITIYPTF.

Belongs to the adenoviridae E3_14 family. Post-translationally, phosphorylated on serine; O-glycosylated, but not N-glycosylated.

The protein resides in the host membrane. Its function is as follows. Down-regulates the EGF receptor and prevents cytolysis by TNF. The sequence is that of Early E3B 14.9 kDa protein from Homo sapiens (Human).